The primary structure comprises 140 residues: 3-hydroxyacyl-[acyl-carrier-protein] dehydratase FabZ (140 aa).

H47 is an active-site residue.

It belongs to the thioester dehydratase family. FabZ subfamily.

It localises to the cytoplasm. It catalyses the reaction a (3R)-hydroxyacyl-[ACP] = a (2E)-enoyl-[ACP] + H2O. Involved in unsaturated fatty acids biosynthesis. Catalyzes the dehydration of short chain beta-hydroxyacyl-ACPs and long chain saturated and unsaturated beta-hydroxyacyl-ACPs. The polypeptide is 3-hydroxyacyl-[acyl-carrier-protein] dehydratase FabZ (Streptococcus pneumoniae serotype 4 (strain ATCC BAA-334 / TIGR4)).